Here is a 61-residue protein sequence, read N- to C-terminus: [Val1,Thr6]-bradykinyl-Gln,Ser (61 aa).

The first 22 residues, 1-22, serve as a signal peptide directing secretion; it reads MSILKKSLFLVLFLGLVSFSIC. A propeptide spanning residues 23 to 50 is cleaved from the precursor; it reads EEEKREAEEEENEDEIEEQSEEKKRFEP. Residues 25–61 form a disordered region; sequence EKREAEEEENEDEIEEQSEEKKRFEPVPPGFTPFRQS. A compositionally biased stretch (acidic residues) spans 30–42; the sequence is EEEENEDEIEEQS. Proline 52 bears the 4-hydroxyproline; in form [Val1,Hyp2,Thr6]-Bradykinyl-Gln,Ser and [Val1,Hyp2,Thr6]-Bradykinin mark.

This sequence belongs to the frog skin active peptide (FSAP) family. Bradykinin-related peptide subfamily. As to expression, expressed by the skin glands.

It localises to the secreted. Its function is as follows. Induces contraction of rat ileum smooth muscle (EC(50)=2.73 uM) but has no activity towards smooth muscle from tail artery, urinary bladder or uterus up to concentrations of 100 uM. Binds to both bradykinin receptor B1 (BDKRB1) and B2 (BDKRB2); the effect via BDKRB1 is stronger. Functionally, [Val1,Hyp2,Thr6]-bradykinin-Gln,Ser: Induces contraction of rat ileum smooth muscle (EC(50)=710 nM) but has no activity towards smooth muscle from tail artery, urinary bladder or uterus up to concentrations of 100 uM. Binds to both bradykinin receptor B1 (BDKRB1) and B2 (BDKRB2); the effect via BDKRB1 is stronger. Induces contraction of guinea pig ileum smooth muscle. In Pithecopus hypochondrialis (Orange-legged leaf frog), this protein is [Val1,Thr6]-bradykinyl-Gln,Ser.